Here is a 360-residue protein sequence, read N- to C-terminus: Serine/threonine-protein kinase SAPK4 (360 aa).

Positions 4–260 (YEAVRDIGSG…MKEIKSHPWF (257 aa)) constitute a Protein kinase domain. ATP-binding positions include 10–18 (IGSGNFGVA) and K33. D123 serves as the catalytic Proton acceptor. The tract at residues 303-360 (TMPKSSRTGYWSDAGSDEEEKEEEERPEENEEEEEDEYDKRVKEVHASGELRMSSLRI) is disordered. A compositionally biased stretch (acidic residues) spans 317 to 339 (GSDEEEKEEEERPEENEEEEEDE). The span at 340 to 351 (YDKRVKEVHASG) shows a compositional bias: basic and acidic residues.

Belongs to the protein kinase superfamily. Ser/Thr protein kinase family. May be phosphorylated. In terms of tissue distribution, expressed in leaf blades, leaf sheaths and roots. Expressed in shoots and roots of young seedlings.

It carries out the reaction L-seryl-[protein] + ATP = O-phospho-L-seryl-[protein] + ADP + H(+). It catalyses the reaction L-threonyl-[protein] + ATP = O-phospho-L-threonyl-[protein] + ADP + H(+). With respect to regulation, activated by hyperosmotic stress. May play a role in signal transduction of hyperosmotic response. This Oryza sativa subsp. japonica (Rice) protein is Serine/threonine-protein kinase SAPK4 (SAPK4).